The chain runs to 354 residues: NADH-quinone oxidoreductase subunit H (354 aa).

8 helical membrane-spanning segments follow: residues 22-42 (ILIR…YLIL), 91-111 (YLIA…VIPF), 124-144 (LLYV…AGWA), 168-188 (MGFA…SAIV), 203-223 (VLSW…ISGV), 255-275 (LFFL…ALLF), 291-311 (IPGF…FIWI), and 326-346 (LGWK…AIWI).

This sequence belongs to the complex I subunit 1 family. As to quaternary structure, NDH-1 is composed of 14 different subunits. Subunits NuoA, H, J, K, L, M, N constitute the membrane sector of the complex.

The protein localises to the cell inner membrane. The enzyme catalyses a quinone + NADH + 5 H(+)(in) = a quinol + NAD(+) + 4 H(+)(out). In terms of biological role, NDH-1 shuttles electrons from NADH, via FMN and iron-sulfur (Fe-S) centers, to quinones in the respiratory chain. The immediate electron acceptor for the enzyme in this species is believed to be ubiquinone. Couples the redox reaction to proton translocation (for every two electrons transferred, four hydrogen ions are translocated across the cytoplasmic membrane), and thus conserves the redox energy in a proton gradient. This subunit may bind ubiquinone. This chain is NADH-quinone oxidoreductase subunit H, found in Cupriavidus pinatubonensis (strain JMP 134 / LMG 1197) (Cupriavidus necator (strain JMP 134)).